The following is a 359-amino-acid chain: NADH-quinone oxidoreductase subunit H (359 aa).

Transmembrane regions (helical) follow at residues 16–36 (IWPA…CVLL), 94–114 (GLFV…WAVI), 129–149 (LLFL…AGWA), 167–187 (VSYE…SASL), 208–228 (FLSW…ISGL), 261–281 (FFLA…ILFL), 296–316 (IPGW…FLWV), and 331–351 (LGWK…GAWM).

It belongs to the complex I subunit 1 family. As to quaternary structure, NDH-1 is composed of 14 different subunits. Subunits NuoA, H, J, K, L, M, N constitute the membrane sector of the complex.

The protein resides in the cell inner membrane. The catalysed reaction is a quinone + NADH + 5 H(+)(in) = a quinol + NAD(+) + 4 H(+)(out). NDH-1 shuttles electrons from NADH, via FMN and iron-sulfur (Fe-S) centers, to quinones in the respiratory chain. The immediate electron acceptor for the enzyme in this species is believed to be ubiquinone. Couples the redox reaction to proton translocation (for every two electrons transferred, four hydrogen ions are translocated across the cytoplasmic membrane), and thus conserves the redox energy in a proton gradient. This subunit may bind ubiquinone. The sequence is that of NADH-quinone oxidoreductase subunit H from Polaromonas sp. (strain JS666 / ATCC BAA-500).